The following is a 401-amino-acid chain: Ureide permease 4 (401 aa).

Residues 1-10 (MYVVESKAGA) are Extracellular-facing. Residues 11–31 (IGCMILSLCCLGSWPAILTLL) traverse the membrane as a helical segment. Residues 32 to 40 (ERRGRLPQH) lie on the Cytoplasmic side of the membrane. A helical transmembrane segment spans residues 41–61 (TFLDFATANLLAAIVIAFSLG). At 62–81 (EIGKSTFLKPDFTTQLPQDN) the chain is on the extracellular side. A helical transmembrane segment spans residues 82–102 (WPSVLLAVAGGVLLSIGNLAT). Residues 103–104 (QY) lie on the Cytoplasmic side of the membrane. The helical transmembrane segment at 105 to 125 (AFAFVGLSVTEVITASITVVI) threads the bilayer. Topologically, residues 126-141 (GTTLNYFLDNKINKAE) are extracellular. The helical transmembrane segment at 142-162 (ILFPGVGCFLIAVFLGAAVHA) threads the bilayer. Over 163–231 (SNAADVKEKL…KRAIKVFGKS (69 aa)) the chain is Cytoplasmic. Residue 224–231 (AIKVFGKS) participates in ATP binding. Residues 232–252 (IMIGLFITLFAGISLSLFSPA) traverse the membrane as a helical segment. Topologically, residues 253-275 (FNLATNDQWSTLPKGVPKLVVYT) are extracellular. Residues 276–296 (AFFYFSIAGFLISLILNLIFL) traverse the membrane as a helical segment. The Cytoplasmic portion of the chain corresponds to 297 to 318 (YRPMVGLARSSLKKYIYDSKGR). Residues 319-339 (GWAVFAGFLCGFGNGLQFMGG) form a helical membrane-spanning segment. Residues 340–344 (QAAGY) lie on the Extracellular side of the membrane. The chain crosses the membrane as a helical span at residues 345 to 365 (AAADSVQALPLVSTFWGIVLF). At 366-374 (GEYRKSSKR) the chain is on the cytoplasmic side. The helical transmembrane segment at 375–395 (TYALLVSMLAMFVAAVAILMA) threads the bilayer. Over 396–401 (SSGHRK) the chain is Extracellular.

It belongs to the plant ureide permease (TC 2.A.7.19) family. Expressed in developing seedlings, flower filaments and stigma, and the top and bottom parts of carpels in siliques.

The protein localises to the membrane. In terms of biological role, proton-coupled transporter that transports a wide spectrum of oxo derivatives of heterocyclic nitrogen compounds. The sequence is that of Ureide permease 4 from Arabidopsis thaliana (Mouse-ear cress).